The following is a 341-amino-acid chain: MVANPGGGSTDAGGGPVRHIPVLLDEVLAALAPAPGKFILDGTFGAGGYSSAILAAGAEVIALDRDPTAIAAGQAMVAAHGGRLRLVHSQFSHLADHAPQGGLDGVVLDIGVSSMQIDEAERGFSFQKNGPLDMRMSAEGVSAADVVNRAKVADLIRIFHFLGEESQAPRIAHAIEKRRAEKPFETTRDLAGLIELVTPRKMKDKIHPATRVFQALRIFVNDELGELAQALFAAETALKPGGRLVVVTFHSLEDRIVKKFFSDRAGKASGSRHLPVAHERAATFEAVGKPMVSASEAEAEINPRARSAKLRAGLRTYAAAEAADMSLFGFPNLASLGKLGG.

S-adenosyl-L-methionine contacts are provided by residues 47–49 (GGY), aspartate 64, phenylalanine 91, aspartate 109, and glutamine 116.

Belongs to the methyltransferase superfamily. RsmH family.

It is found in the cytoplasm. It carries out the reaction cytidine(1402) in 16S rRNA + S-adenosyl-L-methionine = N(4)-methylcytidine(1402) in 16S rRNA + S-adenosyl-L-homocysteine + H(+). Functionally, specifically methylates the N4 position of cytidine in position 1402 (C1402) of 16S rRNA. This Rhizobium johnstonii (strain DSM 114642 / LMG 32736 / 3841) (Rhizobium leguminosarum bv. viciae) protein is Ribosomal RNA small subunit methyltransferase H.